The chain runs to 186 residues: Ribosome-recycling factor (186 aa).

This sequence belongs to the RRF family.

It is found in the cytoplasm. Responsible for the release of ribosomes from messenger RNA at the termination of protein biosynthesis. May increase the efficiency of translation by recycling ribosomes from one round of translation to another. In Rickettsia typhi (strain ATCC VR-144 / Wilmington), this protein is Ribosome-recycling factor.